Here is a 50-residue protein sequence, read N- to C-terminus: U37-theraphotoxin-Cg1b (50 aa).

An N-terminal signal peptide occupies residues 1 to 19; sequence MRVLLIIAGLALLSVVCYT.

This sequence belongs to the neurotoxin 10 (Hwtx-1) family. 67 (Jztx-67) subfamily. In terms of tissue distribution, expressed by the venom gland.

It localises to the secreted. The protein is U37-theraphotoxin-Cg1b of Chilobrachys guangxiensis (Chinese earth tiger tarantula).